The sequence spans 134 residues: Crustacean hyperglycemic hormones isoform A (134 aa).

An N-terminal signal peptide occupies residues 1–24 (MMACRTLCLVVVMVASLGTSGVGG). Residue glutamine 61 is modified to Pyrrolidone carboxylic acid. Phenylalanine 63 bears the D-phenylalanine; in form CHH-A-II mark. Disulfide bonds link cysteine 67/cysteine 103, cysteine 83/cysteine 99, and cysteine 86/cysteine 112. Valine 132 is subject to Valine amide.

This sequence belongs to the arthropod CHH/MIH/GIH/VIH hormone family. Post-translationally, stereoinversion of L-Phe (form CHH-A-I) to D-Phe (form CHH-A-II). As to expression, produced by the medulla terminalis X-organ in the eyestalks and transported to the sinus gland where they are stored and released. Present also in the ventral nervous system.

The protein resides in the secreted. In terms of biological role, CHH is the most abundant hormone in the sinus gland of isopods and decapods which controls the blood sugar level. Has a secretagogue action over the amylase released from the midgut gland. May act as a stress hormone. Its function is as follows. MIH may inhibit Y-organs where molting hormone (ecdysteroid) is secreted and a molting cycle is initiated when MIH secretion diminishes or stops. The protein is Crustacean hyperglycemic hormones isoform A of Homarus americanus (American lobster).